The chain runs to 435 residues: Trigger factor (435 aa).

A PPIase FKBP-type domain is found at 163-248; it reads GDFVTFDFKG…VKEIKVKELP (86 aa).

It belongs to the FKBP-type PPIase family. Tig subfamily.

The protein resides in the cytoplasm. It catalyses the reaction [protein]-peptidylproline (omega=180) = [protein]-peptidylproline (omega=0). Functionally, involved in protein export. Acts as a chaperone by maintaining the newly synthesized protein in an open conformation. Functions as a peptidyl-prolyl cis-trans isomerase. The sequence is that of Trigger factor from Geobacter sp. (strain M21).